Consider the following 280-residue polypeptide: 4-diphosphocytidyl-2-C-methyl-D-erythritol kinase (280 aa).

K8 is a catalytic residue. 91 to 101 (PVSAGLAGGST) contacts ATP. D133 is an active-site residue.

The protein belongs to the GHMP kinase family. IspE subfamily.

The catalysed reaction is 4-CDP-2-C-methyl-D-erythritol + ATP = 4-CDP-2-C-methyl-D-erythritol 2-phosphate + ADP + H(+). It functions in the pathway isoprenoid biosynthesis; isopentenyl diphosphate biosynthesis via DXP pathway; isopentenyl diphosphate from 1-deoxy-D-xylulose 5-phosphate: step 3/6. Its function is as follows. Catalyzes the phosphorylation of the position 2 hydroxy group of 4-diphosphocytidyl-2C-methyl-D-erythritol. The protein is 4-diphosphocytidyl-2-C-methyl-D-erythritol kinase of Clostridium botulinum (strain Alaska E43 / Type E3).